Consider the following 478-residue polypeptide: Hemolysin secretion protein D, chromosomal (478 aa).

Residues 1–59 lie on the Cytoplasmic side of the membrane; that stretch reads MKTWLMGFSEFLLRYKLVWSETWKIRKQLDTPVREKDENEFLPAHLELIETPVSRRPRL. The chain crosses the membrane as a helical; Signal-anchor for type II membrane protein span at residues 60 to 80; the sequence is VAYFIMGFLVIAFILSVLGQV. At 81–478 the chain is on the periplasmic side; that stretch reads EIVATANGKL…ESVTESLHER (398 aa).

This sequence belongs to the membrane fusion protein (MFP) (TC 8.A.1) family.

It is found in the cell inner membrane. Its function is as follows. Involved in the transport of hemolysin A. The sequence is that of Hemolysin secretion protein D, chromosomal (hlyD) from Escherichia coli.